Consider the following 125-residue polypeptide: Ribonuclease P protein component (125 aa).

Belongs to the RnpA family. As to quaternary structure, consists of a catalytic RNA component (M1 or rnpB) and a protein subunit.

It carries out the reaction Endonucleolytic cleavage of RNA, removing 5'-extranucleotides from tRNA precursor.. Functionally, RNaseP catalyzes the removal of the 5'-leader sequence from pre-tRNA to produce the mature 5'-terminus. It can also cleave other RNA substrates such as 4.5S RNA. The protein component plays an auxiliary but essential role in vivo by binding to the 5'-leader sequence and broadening the substrate specificity of the ribozyme. The polypeptide is Ribonuclease P protein component (Oleidesulfovibrio alaskensis (strain ATCC BAA-1058 / DSM 17464 / G20) (Desulfovibrio alaskensis)).